Here is a 619-residue protein sequence, read N- to C-terminus: Enolase 4 (619 aa).

Over residues 173 to 184 (DKERKELEKSQE) the composition is skewed to basic and acidic residues. The segment at 173–236 (DKERKELEKS…PPEPPEPVLH (64 aa)) is disordered. The span at 188-206 (PAPPPVTLPPPPPPPPPPP) shows a compositional bias: pro residues. Position 302 (Glu302) interacts with substrate. The disordered stretch occupies residues 333 to 354 (TLPPPKQETKKGHNGSKRAQPP). Lys497 acts as the Proton acceptor in catalysis. Lys548 provides a ligand contact to substrate.

Belongs to the enolase family. As to quaternary structure, interacts with ENO1. Isoform 1 and isoform 4 interact with AKAP4. Synthesized as an approximately 70-kDa precursor, which then undergoes proteolytic cleavage to an approximately 60-kDa enzyme; HOATZ associates directly or indirectly with ENO4 to mediate this process before its transport to mature flagella. As to expression, testis-specific. Expressed in spermatids and ependyma (at protein level). In terms of tissue distribution, expressed at higher levels in late spermatids than in pachytene spermatocytes. Expressed at higher levels in pachytene spermatocytes than in late spermatids.

It catalyses the reaction (2R)-2-phosphoglycerate = phosphoenolpyruvate + H2O. Its pathway is carbohydrate degradation; glycolysis; pyruvate from D-glyceraldehyde 3-phosphate: step 4/5. In terms of biological role, required for sperm motility, function and male fertility. May be involved in the normal assembly of the sperm fibrous sheath and provides most of the enolase activity in sperm. The protein is Enolase 4 (Eno4) of Mus musculus (Mouse).